We begin with the raw amino-acid sequence, 477 residues long: UDP-N-acetylmuramate--L-alanine ligase (477 aa).

Residue Gly122 to Thr128 coordinates ATP.

Belongs to the MurCDEF family.

It is found in the cytoplasm. The enzyme catalyses UDP-N-acetyl-alpha-D-muramate + L-alanine + ATP = UDP-N-acetyl-alpha-D-muramoyl-L-alanine + ADP + phosphate + H(+). Its pathway is cell wall biogenesis; peptidoglycan biosynthesis. Its function is as follows. Cell wall formation. This chain is UDP-N-acetylmuramate--L-alanine ligase, found in Xanthomonas oryzae pv. oryzae (strain MAFF 311018).